Reading from the N-terminus, the 321-residue chain is MNSTLDSSPAPGLTISPTMDLVTWIYFSVTFLAMATCVGGMAGNSLVIWLLSCNGMQRSPFCVYVLNLAVADFLFLFCMASMLSLETGPLLIVNISAKIYEGMRRIKYFAYTAGLSLLTAISTQRCLSVLFPIWYKCHRPRHLSSVVSGALWALAFLMNFLASFFCVQFWHPNKHQCFKVDIVFNSLILGIFMPVMILTSTILFIRVRKNSLMQRRRPRRLYVVILTSILVFLTCSLPLGINWFLLYWVDVKRDVRLLYSCVSRFSSSLSSSANPVIYFLVGSQKSHRLQESLGAVLGRALRDEPEPEGRETPSTCTNDGV.

Residues 1–8 lie on the Extracellular side of the membrane; it reads MNSTLDSS. An N-linked (GlcNAc...) asparagine glycan is attached at N2. The helical transmembrane segment at 9 to 29 threads the bilayer; it reads PAPGLTISPTMDLVTWIYFSV. A topological domain (cytoplasmic) is located at residue T30. A helical membrane pass occupies residues 31–51; it reads FLAMATCVGGMAGNSLVIWLL. The Extracellular segment spans residues 52–72; sequence SCNGMQRSPFCVYVLNLAVAD. The chain crosses the membrane as a helical span at residues 73–93; it reads FLFLFCMASMLSLETGPLLIV. The Cytoplasmic segment spans residues 94–146; that stretch reads NISAKIYEGMRRIKYFAYTAGLSLLTAISTQRCLSVLFPIWYKCHRPRHLSSV. A helical transmembrane segment spans residues 147-167; sequence VSGALWALAFLMNFLASFFCV. Residues 168-181 are Extracellular-facing; sequence QFWHPNKHQCFKVD. Residues 182–202 traverse the membrane as a helical segment; it reads IVFNSLILGIFMPVMILTSTI. Over 203 to 220 the chain is Cytoplasmic; that stretch reads LFIRVRKNSLMQRRRPRR. Residues 221-241 form a helical membrane-spanning segment; that stretch reads LYVVILTSILVFLTCSLPLGI. Residues 242 to 260 lie on the Extracellular side of the membrane; that stretch reads NWFLLYWVDVKRDVRLLYS. Residues 261–281 traverse the membrane as a helical segment; sequence CVSRFSSSLSSSANPVIYFLV. The Cytoplasmic portion of the chain corresponds to 282–321; the sequence is GSQKSHRLQESLGAVLGRALRDEPEPEGRETPSTCTNDGV. Positions 302–311 are enriched in basic and acidic residues; the sequence is RDEPEPEGRE. Residues 302-321 form a disordered region; that stretch reads RDEPEPEGRETPSTCTNDGV. Residues 312–321 are compositionally biased toward polar residues; that stretch reads TPSTCTNDGV.

This sequence belongs to the G-protein coupled receptor 1 family. Mas subfamily. In terms of tissue distribution, expressed in a subset of sensory neurons that includes nociceptors. Expressed in the subclass of non-peptidergic sensory neurons that are IB4(+) and VR1(-).

The protein resides in the cell membrane. In terms of biological role, may regulate nociceptor function and/or development, including the sensation or modulation of pain. Functions as a specific membrane receptor for beta-alanine. The receptor couples with G-protein G(q) and G(i). The sequence is that of Mas-related G-protein coupled receptor member D (Mrgprd) from Mus musculus (Mouse).